The following is a 314-amino-acid chain: MAESLMDVKRRIDSTKKTHQITSAMQMVSTSKLNQIQKHTSTYQVYASKVESIVSHLAKAHLMSASAGVANSNSNTISVSELLAQRPVKKTGLLVITSDRGLVGSYNSNVLKQTNDFMRTHKVDADNAVVLAVGGTGADFYKKNGLNVAYEYRGVSDVPTFKEVREIVKTVTSMYHNEVFDELYVFYNHFINRLSSGFRAVKMLPISEETFEQSESDNRKAKDSRVDVGPEYEMEPSEEAILSAVLPQYAESLVYGAILDAKTAEHASSSTAMKAASDNAGDLIDKLNLKYNRARQAAITTEITEITGGLVAQE.

This sequence belongs to the ATPase gamma chain family. In terms of assembly, F-type ATPases have 2 components, CF(1) - the catalytic core - and CF(0) - the membrane proton channel. CF(1) has five subunits: alpha(3), beta(3), gamma(1), delta(1), epsilon(1). CF(0) has three main subunits: a, b and c.

It localises to the cell membrane. In terms of biological role, produces ATP from ADP in the presence of a proton gradient across the membrane. The gamma chain is believed to be important in regulating ATPase activity and the flow of protons through the CF(0) complex. The polypeptide is ATP synthase gamma chain (Lactiplantibacillus plantarum (strain ATCC BAA-793 / NCIMB 8826 / WCFS1) (Lactobacillus plantarum)).